The sequence spans 150 residues: Flagellar assembly factor FliW (150 aa).

It belongs to the FliW family. As to quaternary structure, interacts with translational regulator CsrA and flagellin(s).

It is found in the cytoplasm. Functionally, acts as an anti-CsrA protein, binds CsrA and prevents it from repressing translation of its target genes, one of which is flagellin. Binds to flagellin and participates in the assembly of the flagellum. This is Flagellar assembly factor FliW from Leptospira borgpetersenii serovar Hardjo-bovis (strain JB197).